The primary structure comprises 506 residues: uncharacterized protein (506 aa).

Belongs to the Mg-chelatase subunits D/I family. ComM subfamily.

This is an uncharacterized protein from Salmonella typhimurium (strain LT2 / SGSC1412 / ATCC 700720).